A 307-amino-acid chain; its full sequence is Cyclin-dependent kinase 5 activator 1 (307 aa).

Gly2 carries N-myristoyl glycine lipidation. Ser8 carries the post-translational modification Phosphoserine; by CDK5. Positions Thr97 to Ala136 are disordered. A compositionally biased stretch (pro residues) spans Gln100 to Pro110. Residues Ala111–Ser124 show a composition bias toward low complexity. Thr138 carries the post-translational modification Phosphothreonine; by CDK5.

This sequence belongs to the cyclin-dependent kinase 5 activator family. As to quaternary structure, heterodimer composed of a catalytic subunit CDK5 and a regulatory subunit CDK5R1 (p25) and macromolecular complex composed of at least CDK5, CDK5R1 (p35) and CDK5RAP1 or CDK5RAP2 or CDK5RAP3. Only the heterodimer shows kinase activity. Interacts with EPHA4 and NGEF; may mediate the activation of NGEF by EPHA4. Interacts with RASGRF2. The complex p35/CDK5 interacts with CLOCK. The p35 form is proteolytically cleaved by calpain, giving rise to the p25 form. P35 has a 5 to 10 fold shorter half-life compared to p25. The conversion results in deregulation of the CDK5 kinase: p25/CDK5 kinase displays an increased and altered tau phosphorylation in comparison to the p35/CDK5 kinase in vivo. In terms of processing, myristoylated. A proper myristoylation signal is essential for the proper distribution of p35. Post-translationally, ubiquitinated, leading to its degradation: degradation of p35 by proteasome results in down-regulation of CDK5 activity. During this process, CDK5 phosphorylates p35 and induces its ubiquitination and subsequent degradation. Ubiquitinated by the CRL2(FEM1B) complex, which recognizes the -Gly-Leu-Asp-Arg C-degron at the C-terminus, leading to its degradation. Phosphorylation at Ser-8 and Thr-138 by CDK5 prevents calpain-mediated proteolysis. As to expression, brain and neuron specific.

The protein resides in the cell membrane. Its subcellular location is the cell projection. It is found in the neuron projection. It localises to the nucleus. The protein localises to the cytoplasm. The protein resides in the perinuclear region. Its subcellular location is the perikaryon. In terms of biological role, p35 is a neuron specific activator of CDK5. The complex p35/CDK5 is required for neurite outgrowth and cortical lamination. Involved in dendritic spine morphogenesis by mediating the EFNA1-EPHA4 signaling. Activator of TPKII. The complex p35/CDK5 participates in the regulation of the circadian clock by modulating the function of CLOCK protein: phosphorylates CLOCK at 'Thr-451' and 'Thr-461' and regulates the transcriptional activity of the CLOCK-BMAL1 heterodimer in association with altered stability and subcellular distribution. This chain is Cyclin-dependent kinase 5 activator 1 (CDK5R1), found in Homo sapiens (Human).